We begin with the raw amino-acid sequence, 209 residues long: Putative AgrB-like protein (209 aa).

5 helical membrane-spanning segments follow: residues 49-71 (ILFLVSYYFGLIKETIIMLAAFG), 82-102 (AKNSIVCTVMSLLMFVLGAYL), 105-125 (YLLFNNYMVLASFIIVNLLLF), 149-169 (QAVLMGMLLMAITLIIPDELI), and 173-193 (ISLSSYFEIISILPITYKVLG).

The protein belongs to the AgrB family.

It localises to the cell membrane. In terms of biological role, may be involved in the proteolytic processing of a quorum sensing system signal molecule precursor. The polypeptide is Putative AgrB-like protein (Clostridium acetobutylicum (strain ATCC 824 / DSM 792 / JCM 1419 / IAM 19013 / LMG 5710 / NBRC 13948 / NRRL B-527 / VKM B-1787 / 2291 / W)).